We begin with the raw amino-acid sequence, 119 residues long: Small ribosomal subunit protein uS10 (119 aa).

Alanine 2 is subject to N-acetylalanine. Residue lysine 4 forms a Glycyl lysine isopeptide (Lys-Gly) (interchain with G-Cter in ubiquitin) linkage. Lysine 8 is modified (N6-succinyllysine; alternate). Lysine 8 participates in a covalent cross-link: Glycyl lysine isopeptide (Lys-Gly) (interchain with G-Cter in ubiquitin); alternate. Threonine 9 is subject to Phosphothreonine. An N6-acetyllysine mark is found at lysine 34 and lysine 75. Phosphoserine is present on serine 93.

The protein belongs to the universal ribosomal protein uS10 family. Component of the 40S small ribosomal subunit. In terms of processing, polyubiquitinated by ZNF598 via 'Lys-63'-linked ubiquitin chains when a ribosome has stalled, initiating the ribosome quality control (RQC) pathway to degrade the potentially detrimental aberrant nascent polypeptide. Deubiquitinated by OTUD3 and USP21, antagonizing ZNF598 activity. Post-translationally, ufmylated by UFL1.

The protein localises to the cytoplasm. Its function is as follows. Component of the small ribosomal subunit. The ribosome is a large ribonucleoprotein complex responsible for the synthesis of proteins in the cell. The protein is Small ribosomal subunit protein uS10 (Rps20) of Rattus norvegicus (Rat).